Reading from the N-terminus, the 113-residue chain is U11-theraphotoxin-Hhn1a (113 aa).

The signal sequence occupies residues 1 to 21 (MNTVRATFLLVFVLAVSLGQA). Positions 22-74 (DKDENRMEMQEKTEQGKSYLDFAENLLLQKLEELEAKLLEEDSEESRNSRQKR) are excised as a propeptide. Residues 60–69 (LEEDSEESRN) show a composition bias toward basic and acidic residues. Residues 60–82 (LEEDSEESRNSRQKRCIGEGVPC) are disordered. 3 disulfides stabilise this stretch: Cys75–Cys90, Cys82–Cys95, and Cys89–Cys110.

The protein belongs to the neurotoxin 14 (magi-1) family. 01 (HNTX-16) subfamily. As to expression, expressed by the venom gland.

It is found in the secreted. Its function is as follows. Probable ion channel inhibitor. This chain is U11-theraphotoxin-Hhn1a, found in Cyriopagopus hainanus (Chinese bird spider).